A 572-amino-acid chain; its full sequence is Myb-like protein Y (572 aa).

Residues 196–211 are compositionally biased toward polar residues; that stretch reads QSQSQLPTATNNNNKQ. Residues 196-283 are disordered; sequence QSQSQLPTAT…NNNNNNNNNE (88 aa). Composition is skewed to low complexity over residues 222 to 237 and 260 to 281; these read TATA…TTTT and NDNN…NNNN. Positions 311-360 constitute a Myb-like domain; the sequence is PWTVEDQKKLEDALTKYPPSRFSSVSRWQMVSKELGISPKAVALRYNQML. Residues 367–456 are disordered; sequence KPSLQQQQQQ…TTVTPNMTTP (90 aa). 2 stretches are compositionally biased toward low complexity: residues 371-392 and 414-425; these read QQQQ…TTTT and SSFSSPSSSSKE. The segment covering 426-435 has biased composition (basic and acidic residues); the sequence is SPNKKEKTTH. Residues 436–455 show a composition bias toward low complexity; sequence DTTTTTNTATTTTVTPNMTT.

This is Myb-like protein Y (mybY) from Dictyostelium discoideum (Social amoeba).